The primary structure comprises 260 residues: HTH-type transcriptional repressor NanR (260 aa).

A disordered region spans residues Met-1–Arg-22. An HTH gntR-type domain is found at Lys-27–Pro-95. Residues Glu-55–Ala-74 constitute a DNA-binding region (H-T-H motif).

It belongs to the NanR family.

In terms of biological role, transcriptional repressor that controls expression of the genes required for the catabolism of sialic acids. In Salmonella newport (strain SL254), this protein is HTH-type transcriptional repressor NanR.